The following is a 228-amino-acid chain: Putative adhesin A1I_01215 (228 aa).

The first 22 residues, 1–22 (MKKLLLIAATSATVLSSALSFA), serve as a signal peptide directing secretion.

The chain is Putative adhesin A1I_01215 from Rickettsia bellii (strain OSU 85-389).